The primary structure comprises 114 residues: UPF0102 protein CD630_12710 (114 aa).

The protein belongs to the UPF0102 family.

This Clostridioides difficile (strain 630) (Peptoclostridium difficile) protein is UPF0102 protein CD630_12710.